A 662-amino-acid polypeptide reads, in one-letter code: Interleukin-12 receptor subunit beta-1 (662 aa).

The signal sequence occupies residues 1 to 23 (MEPLVTWVVPLLFLFLLSRQGAA). The Extracellular segment spans residues 24–545 (CRTSECCFQD…RFSIEVQVSD (522 aa)). Fibronectin type-III domains follow at residues 46 to 136 (GPRD…LYNS), 142 to 234 (PLGD…VPPE), 237 to 337 (PQPQ…IPAD), 338 to 444 (THTE…GNAS), and 448 to 542 (TPHH…IEVQ). A disulfide bond links cysteine 52 and cysteine 62. An N-linked (GlcNAc...) asparagine glycan is attached at asparagine 121. The WSXWS motif motif lies at 222–226 (WSKWS). N-linked (GlcNAc...) asparagine glycosylation is found at asparagine 329, asparagine 346, asparagine 352, asparagine 442, and asparagine 456. A helical membrane pass occupies residues 546–570 (WLIFFASLGSFLSILLVGVLGYLGL). The Cytoplasmic segment spans residues 571–662 (NRAARHLCPP…EDGDRCKAKM (92 aa)). Residues 577 to 585 (LCPPLPTPC) carry the Box 1 motif motif. A compositionally biased stretch (basic and acidic residues) spans 626 to 637 (GERTEPLEKTEL). The tract at residues 626–648 (GERTEPLEKTELPEGAPELALDT) is disordered.

It belongs to the type I cytokine receptor family. Type 2 subfamily. As to quaternary structure, dimer or oligomer; disulfide-linked. Interacts with IL12RB2 to form the high affinity IL12 receptor. Heterodimer with IL23R; in presence of IL23. The heterodimer forms the IL23 receptor.

Its subcellular location is the membrane. Functions as an interleukin receptor which binds interleukin-12 with low affinity and is involved in IL12 transduction. Associated with IL12RB2 it forms a functional, high affinity receptor for IL12. Also associates with IL23R to form the interleukin-23 receptor which functions in IL23 signal transduction probably through activation of the Jak-Stat signaling cascade. The sequence is that of Interleukin-12 receptor subunit beta-1 (IL12RB1) from Homo sapiens (Human).